The following is a 331-amino-acid chain: Aldo-keto reductase family 7 member A3 (331 aa).

At Ser-6 the chain carries Phosphoserine. NADPH contacts are provided by Met-17, Asp-44, and Tyr-49. Tyr-49 functions as the Proton donor in the catalytic mechanism. Phosphoserine is present on Ser-85. The NADPH site is built by His-113, Ser-143, Asn-144, Asn-198, Leu-200, Gly-202, Lys-208, Tyr-209, and Arg-222. Position 227 is a phosphothreonine (Thr-227). NADPH contacts are provided by Ser-290, Gln-294, and Asn-298.

Belongs to the aldo/keto reductase family. Aldo/keto reductase 2 subfamily. As to quaternary structure, homodimer. Expressed in colon, kidney, liver, pancreas, adenocarcinoma and endometrium.

Its subcellular location is the cytoplasm. It catalyses the reaction a primary alcohol + NADP(+) = an aldehyde + NADPH + H(+). The catalysed reaction is aflatoxin B1 dialdehyde + NADPH + H(+) = aflatoxin B1 C(6a)-monoaldehyde + NADP(+). The enzyme catalyses aflatoxin B1 dialdehyde + NADPH + H(+) = aflatoxin B1 C(8)-monoaldehyde + NADP(+). It carries out the reaction aflatoxin B1 C(6a)-monoaldehyde + NADPH + 2 H(+) = aflatoxin B1 triol + NADP(+). Inhibited by citrate. Catalyzes the NADPH-dependent reduction of various carbonyl-containing compounds, including aldehydes, ketones, and toxic products from cellular metabolism or environmental exposure. Can reduce the dialdehyde form of aflatoxin B1 (AFB1) into alcohol derivatives, via monoaldehydes intermediates. Can reduce the dialdehyde form of aflatoxin B1 (AFB1) into alcohol derivatives, via monoaldehydes intermediates, thus preventing the formation of protein adducts that contribute to AFB1-induced toxicity. This Homo sapiens (Human) protein is Aldo-keto reductase family 7 member A3.